The primary structure comprises 262 residues: Type III pantothenate kinase (262 aa).

6–13 contributes to the ATP binding site; it reads DVGNTNAV. Residues Y100 and 107–110 each bind substrate; that span reads GADR. The active-site Proton acceptor is the D109. D129 contacts K(+). Residue T132 participates in ATP binding. T184 provides a ligand contact to substrate.

It belongs to the type III pantothenate kinase family. As to quaternary structure, homodimer. It depends on NH4(+) as a cofactor. K(+) is required as a cofactor.

The protein resides in the cytoplasm. The enzyme catalyses (R)-pantothenate + ATP = (R)-4'-phosphopantothenate + ADP + H(+). It functions in the pathway cofactor biosynthesis; coenzyme A biosynthesis; CoA from (R)-pantothenate: step 1/5. In terms of biological role, catalyzes the phosphorylation of pantothenate (Pan), the first step in CoA biosynthesis. The sequence is that of Type III pantothenate kinase from Bacillus anthracis (strain A0248).